Reading from the N-terminus, the 547-residue chain is Chaperonin GroEL (547 aa).

ATP is bound by residues 30–33, Lys-51, 87–91, Gly-415, 479–481, and Asp-495; these read TLGP, DGTTT, and NAA.

The protein belongs to the chaperonin (HSP60) family. In terms of assembly, forms a cylinder of 14 subunits composed of two heptameric rings stacked back-to-back. Interacts with the co-chaperonin GroES.

Its subcellular location is the cytoplasm. It catalyses the reaction ATP + H2O + a folded polypeptide = ADP + phosphate + an unfolded polypeptide.. Its function is as follows. Together with its co-chaperonin GroES, plays an essential role in assisting protein folding. The GroEL-GroES system forms a nano-cage that allows encapsulation of the non-native substrate proteins and provides a physical environment optimized to promote and accelerate protein folding. The polypeptide is Chaperonin GroEL (Delftia acidovorans (strain DSM 14801 / SPH-1)).